Reading from the N-terminus, the 426-residue chain is Endothelin-1 receptor (426 aa).

An N-terminal signal peptide occupies residues 1-20; that stretch reads MGVLCFLASFWLALVGGAIA. Over 21–80 the chain is Extracellular; it reads DNAERYSANLSSHVEDFTPFPGTEFNFLGTTLQPPNLALPSNGSMHGYCPQQTKITTAFK. N-linked (GlcNAc...) asparagine glycosylation is found at Asn29 and Asn62. The helical transmembrane segment at 81-102 threads the bilayer; that stretch reads YINTVISCTIFIVGMVGNATLL. The Cytoplasmic segment spans residues 103 to 112; the sequence is RIIYQNKCMR. Residues 113-132 form a helical membrane-spanning segment; that stretch reads NGPNALIASLALGDLIYVVI. Over 133–159 the chain is Extracellular; the sequence is DLPINVFKLLAGRWPFDHNDFGVFLCK. Residues Cys158 and Cys239 are joined by a disulfide bond. The chain crosses the membrane as a helical span at residues 160-181; it reads LFPFLQKSSVGITVLNLCALSV. The Cytoplasmic segment spans residues 182-205; it reads DRYRAVASWSRVQGIGIPLITAIE. Residues 206-229 form a helical membrane-spanning segment; sequence IVSIWILSFILAIPEAIGFVMVPF. Residues 230 to 256 lie on the Extracellular side of the membrane; it reads EYKGEQHRTCMLNATTKFMEFYQDVKD. A helical membrane pass occupies residues 257 to 278; sequence WWLFGFYFCMPLVCTAIFYTLM. Residues 279–306 are Cytoplasmic-facing; that stretch reads TCEMLNRRNGSLRIALSEHLKQRREVAK. Residues 307-328 form a helical membrane-spanning segment; that stretch reads TVFCLVVIFALCWFPLHLSRIL. Residues 329 to 347 lie on the Extracellular side of the membrane; it reads KKTVYDEMDKNRCELLSFL. A helical membrane pass occupies residues 348–372; that stretch reads LLMDYIGINLATMNSCINPIALYFV. Topologically, residues 373 to 426 are cytoplasmic; the sequence is SKKFKNCFQSCLCCCCHQSKSLMTSVPMNGTSIQWKNQEQNHNTERSSHKDSMN. The residue at position 424 (Ser424) is a Phosphoserine.

It belongs to the G-protein coupled receptor 1 family. Endothelin receptor subfamily. EDNRA sub-subfamily. In terms of assembly, interacts with HDAC7 and KAT5. Predominantly expressed in vascular smooth muscle cells of a variety of issues, bronchial smooth muscle cells, myocardium, and the pituitary gland.

It localises to the cell membrane. Functionally, receptor for endothelin-1. Mediates its action by association with G proteins that activate a phosphatidylinositol-calcium second messenger system. The rank order of binding affinities for ET-A is: ET1 &gt; ET2 &gt;&gt; ET3. This chain is Endothelin-1 receptor, found in Rattus norvegicus (Rat).